A 189-amino-acid chain; its full sequence is Elongation factor P (189 aa).

It belongs to the elongation factor P family.

It localises to the cytoplasm. The protein operates within protein biosynthesis; polypeptide chain elongation. In terms of biological role, involved in peptide bond synthesis. Stimulates efficient translation and peptide-bond synthesis on native or reconstituted 70S ribosomes in vitro. Probably functions indirectly by altering the affinity of the ribosome for aminoacyl-tRNA, thus increasing their reactivity as acceptors for peptidyl transferase. The protein is Elongation factor P of Chloroflexus aggregans (strain MD-66 / DSM 9485).